We begin with the raw amino-acid sequence, 188 residues long: MFHQIWAALLYLYGILLNSIYQCPEHSQLTTGGVDGKEFPEPHLGQWYFIAGAAPTKEELATFDPVDNIVFNMAAGSVPMQLQLRATIRTKNGLCVPRKWIYRLSEGNTDLRTEGRPDMKTKLFSSTCPGGIMLKETGQGYQRFLLYNRSPHPPEKCVEEFQSLTSCLDFKAFLLTPRNQEACELSSN.

The segment at residues 1 to 22 (MFHQIWAALLYLYGILLNSIYQ) is a signal peptide (not cleaved). Disulfide bonds link Cys-23/Cys-167, Cys-95/Cys-183, and Cys-128/Cys-157. Tetradecanoate is bound by residues Glu-136 and Arg-143.

The protein belongs to the calycin superfamily. Lipocalin family. Highly divergent. Interacts with LRP2; LRP2 mediates APOM renal uptake and subsequent lysosomal degradation.

It localises to the secreted. Probably involved in lipid transport. Can bind sphingosine-1-phosphate, myristic acid, palmitic acid and stearic acid, retinol, all-trans-retinoic acid and 9-cis-retinoic acid. In Sus scrofa (Pig), this protein is Apolipoprotein M (APOM).